A 338-amino-acid polypeptide reads, in one-letter code: MKVFYDKDCDLSLIKGKTVAIIGYGSQGHAHAQNLNDSGVKVVVGLRKGGASWPKVEKAGLKVAEVADAVKAADVVMILLPDEQIGAVYANDVAPNIKQGASLVFAHGFNVHYGAVIPRADLDVWMVAPKAPGHTVRNTYTQGGGVPHLVAVHQDKSGKARDLALSYAMANGGGKAGIIETNFREETETDLFGEQAVLCGGTVELIKAGFETLVEAGYAPEMAYFECLHELKLIVDLIYEGGIANMNYSISNNAEYGEYVTGPNIVTSATKEAMRKCLKDIQTGEYAKSFLLENRVGAPTLLSRRRLNAEHQIEIVGEKLRAMMPWIAKNKLVDQTRN.

The KARI N-terminal Rossmann domain maps to 1-181 (MKVFYDKDCD…GGGKAGIIET (181 aa)). NADP(+) contacts are provided by residues 24–27 (YGSQ), Arg47, and Ser52. His107 is an active-site residue. Gly133 contacts NADP(+). The 146-residue stretch at 182–327 (NFREETETDL…EKLRAMMPWI (146 aa)) folds into the KARI C-terminal knotted domain. Mg(2+) contacts are provided by Asp190, Glu194, Glu226, and Glu230. Substrate is bound at residue Ser251.

Belongs to the ketol-acid reductoisomerase family. Requires Mg(2+) as cofactor.

It catalyses the reaction (2R)-2,3-dihydroxy-3-methylbutanoate + NADP(+) = (2S)-2-acetolactate + NADPH + H(+). The catalysed reaction is (2R,3R)-2,3-dihydroxy-3-methylpentanoate + NADP(+) = (S)-2-ethyl-2-hydroxy-3-oxobutanoate + NADPH + H(+). It functions in the pathway amino-acid biosynthesis; L-isoleucine biosynthesis; L-isoleucine from 2-oxobutanoate: step 2/4. The protein operates within amino-acid biosynthesis; L-valine biosynthesis; L-valine from pyruvate: step 2/4. In terms of biological role, involved in the biosynthesis of branched-chain amino acids (BCAA). Catalyzes an alkyl-migration followed by a ketol-acid reduction of (S)-2-acetolactate (S2AL) to yield (R)-2,3-dihydroxy-isovalerate. In the isomerase reaction, S2AL is rearranged via a Mg-dependent methyl migration to produce 3-hydroxy-3-methyl-2-ketobutyrate (HMKB). In the reductase reaction, this 2-ketoacid undergoes a metal-dependent reduction by NADPH to yield (R)-2,3-dihydroxy-isovalerate. The polypeptide is Ketol-acid reductoisomerase (NADP(+)) (Polaromonas sp. (strain JS666 / ATCC BAA-500)).